The chain runs to 271 residues: Large ribosomal subunit protein uL2 (271 aa).

A disordered region spans residues Arg221 to Lys271. The span at Thr257–Lys271 shows a compositional bias: basic residues.

The protein belongs to the universal ribosomal protein uL2 family. As to quaternary structure, part of the 50S ribosomal subunit. Forms a bridge to the 30S subunit in the 70S ribosome.

In terms of biological role, one of the primary rRNA binding proteins. Required for association of the 30S and 50S subunits to form the 70S ribosome, for tRNA binding and peptide bond formation. It has been suggested to have peptidyltransferase activity; this is somewhat controversial. Makes several contacts with the 16S rRNA in the 70S ribosome. This is Large ribosomal subunit protein uL2 from Karelsulcia muelleri (strain GWSS) (Sulcia muelleri).